We begin with the raw amino-acid sequence, 314 residues long: Olfactory receptor 11H7 (314 aa).

At 1-24 (MNNSQISTVTQFVLLGFPGPWKIQ) the chain is on the extracellular side. The N-linked (GlcNAc...) asparagine glycan is linked to asparagine 2. Residues 25–45 (IIFFSMILLVYIFTLTGNMAI) form a helical membrane-spanning segment. Residues 46–57 (ICAVRWDHRLHT) lie on the Cytoplasmic side of the membrane. The helical transmembrane segment at 58–78 (PMYVLLANFSFLEIWYVTCTV) threads the bilayer. Residues 79-97 (PNMLVNFFSKTKTISFSGC) lie on the Extracellular side of the membrane. Cysteine 97 and cysteine 179 are disulfide-bonded. A helical transmembrane segment spans residues 98–118 (FTQFHFFFSLGTTECFFLCVM). The Cytoplasmic portion of the chain corresponds to 119–142 (AYDRYLAICHPLHYPSIMTGQLCG). Residues 143 to 163 (ILVSLCWLIGFLGHSISIFFI) traverse the membrane as a helical segment. Over 164 to 201 (FQLPFCGPNIIDHFLCDVDPLMALSSAPTHIIGHVFHS) the chain is Extracellular. The helical transmembrane segment at 202 to 222 (VSSLFINLTMVYILGSYTLVL) threads the bilayer. Topologically, residues 223–244 (RTVLQVPSSAGWQKAISTCGSH) are cytoplasmic. A helical membrane pass occupies residues 245–265 (LVVVSLFYGAIMLMYVSPTPG). The Extracellular portion of the chain corresponds to 266-271 (NSVAMH). The helical transmembrane segment at 272 to 292 (KLITLIYSVVTPVLNPLIYSL) threads the bilayer. Residues 293-314 (RNKDMKYALHHVFCGMRIIQRS) are Cytoplasmic-facing.

The protein belongs to the G-protein coupled receptor 1 family.

Its subcellular location is the cell membrane. In terms of biological role, odorant receptor. Activated by isovaleric acid. This Homo sapiens (Human) protein is Olfactory receptor 11H7 (OR11H7).